A 3907-amino-acid polypeptide reads, in one-letter code: A-kinase anchor protein 9 (3907 aa).

Residues 1-14 (MEDEERQKKLEAGK) show a composition bias toward basic and acidic residues. The interval 1 to 57 (MEDEERQKKLEAGKAKLAQFRQRKAQSDGQSPSKKQKKKRKTSSSKHDVSAHHDLNI) is disordered. Over residues 34–44 (KKQKKKRKTSS) the composition is skewed to basic residues. A compositionally biased stretch (basic and acidic residues) spans 45–56 (SKHDVSAHHDLN). Coiled coils occupy residues 152–902 (DSPT…ELHL), 932–1010 (EVVE…ENVQ), 1088–1173 (QPSE…QTMK), 1241–1268 (ELQD…EEYN), 1324–1380 (KLSS…ESTV), 1422–1447 (VKEE…VAKV), and 1573–1647 (SMDA…DNEN). At S153 the chain carries Phosphoserine. S1327 bears the Phosphoserine mark. Over residues 1682-1692 (STQTQNGNENQ) the composition is skewed to low complexity. The disordered stretch occupies residues 1682 to 1713 (STQTQNGNENQGEVEEQTFKEKELDRKPEDVP). Residues 1698–1711 (QTFKEKELDRKPED) are compositionally biased toward basic and acidic residues. Residue S1765 is modified to Phosphoserine. Coiled-coil stretches lie at residues 1845-2443 (NISS…VEKI), 2532-2549 (ETEM…IVEE), 2591-2764 (QLRE…SKKA), 3061-3088 (LNCL…ADRR), 3120-3466 (ELLE…NLNE), and 3583-3685 (SLTE…NDSL). A PKA-RII subunit binding domain region spans residues 2542 to 2555 (NLQKIVEEKVAAAL). The tract at residues 3377–3405 (RQQMEKDRQVHRKTLQTEQEANTEGQKKM) is disordered. S3690, S3842, S3865, and S3897 each carry phosphoserine.

As to quaternary structure, interacts with the regulatory region of protein kinase N (PKN), protein phosphatase 2A (PP2A), protein phosphatase 1 (PP1) and the immature non-phosphorylated form of PKC epsilon. Interacts with CIP4 and FNBP1. Interacts with chloride intracellular channel proteins CLIC1, CLIC4 and CLIC5. CSNK1D binding promotes its centrosomal subcellular location. Interacts with GM130/GOLGA2; leading to recruitment to the Golgi apparatus. Interacts with KCNQ1; targets protein kinase A (PKA) catalytic and regulatory subunits and protein phosphatase 1 (PP1), to the heterodimer KCNQ1-KCNE1. Interacts with PDE4DIP isoform 13/MMG8/SMYLE; this interaction stabilizes both proteins. In complex with PDE4DIP isoform 13, recruits CAMSAP2 to the Golgi apparatus. Forms a pericentrosomal complex with CDK5RAP2, EB1/MAPRE1 and PDE4DIP isoform 13; within this complex, MAPRE1 binding to CDK5RAP2 may be mediated by PDE4DIP. Interacts with MAPRE1 and MAPRE3. Interacts (via C-terminus) with CAMSAP2; this interaction is much stronger in the presence of PDE4DIP isoform 13/MMG8/SMYLE. Interacts with CAMSAP3. Interacts (via C-terminus) with the gamma-tubulin ring complex (gamma-TuRC), composed of gamma-tubulin, TUBGCP2, TUBGCP3, TUBGCP4, TUBGCP5 and TUBGCP6. In terms of tissue distribution, widely expressed. Isoform 4: Highly expressed in skeletal muscle and in pancreas.

The protein resides in the golgi apparatus. Its subcellular location is the cytoplasm. It is found in the cytoskeleton. It localises to the microtubule organizing center. The protein localises to the centrosome. Its function is as follows. Scaffolding protein that assembles several protein kinases and phosphatases on the centrosome and Golgi apparatus. Required to maintain the integrity of the Golgi apparatus. Required for microtubule nucleation at the cis-side of the Golgi apparatus. Required for association of the centrosomes with the poles of the bipolar mitotic spindle during metaphase. In complex with PDE4DIP isoform 13/MMG8/SMYLE, recruits CAMSAP2 to the Golgi apparatus and tethers non-centrosomal minus-end microtubules to the Golgi, an important step for polarized cell movement. In complex with PDE4DIP isoform 13/MMG8/SMYLE, EB1/MAPRE1 and CDK5RAP2, contributes to microtubules nucleation and extension also from the centrosome to the cell periphery. Associated with the N-methyl-D-aspartate receptor and is specifically found in the neuromuscular junction (NMJ) as well as in neuronal synapses, suggesting a role in the organization of postsynaptic specializations. This Homo sapiens (Human) protein is A-kinase anchor protein 9 (AKAP9).